Consider the following 530-residue polypeptide: Nectin-2 (530 aa).

Residues 1–31 form the signal peptide; the sequence is MARAAVLPPSRLSPTLPLLPLLLLLLQETGA. Positions 32–147 constitute an Ig-like V-type domain; it reads QDVRVRVLPE…NGTRRGVTWL (116 aa). Over 32-351 the chain is Extracellular; it reads QDVRVRVLPE…STAGAGATGG (320 aa). Residues Cys54 and Cys131 are joined by a disulfide bond. 2 N-linked (GlcNAc...) asparagine glycosylation sites follow: Asn128 and Asn138. Ig-like C2-type domains follow at residues 153 to 247 and 252 to 337; these read PENH…VTLS and PEVS…VILV. 2 cysteine pairs are disulfide-bonded: Cys174/Cys229 and Cys274/Cys320. The N-linked (GlcNAc...) asparagine glycan is linked to Asn315. The chain crosses the membrane as a helical span at residues 352–372; it reads IIGGIIAAIIATAVAGTGILI. Topologically, residues 373 to 530 are cytoplasmic; that stretch reads CRQQRKEQRL…DFFVSRAMYV (158 aa). The segment at 382-407 is disordered; that stretch reads LQAADEEEELEGPPSYKPPTPKAKLE. Thr401 is subject to Phosphothreonine. Ser424 is subject to Phosphoserine.

Belongs to the nectin family. In terms of assembly, can form trans-heterodimers with NECTIN3. Interacts with CD226 or with PVRIG; these interactions are competitive and have a differential functional outcome on T-cell activation, either positive or negative, respectively. Binds with low affinity to TIGIT. As to expression, brain, spinal cord, spleen, kidney, heart and liver.

The protein resides in the cell membrane. Modulator of T-cell signaling. Can be either a costimulator of T-cell function, or a coinhibitor, depending on the receptor it binds to. Upon binding to CD226, stimulates T-cell proliferation and cytokine production, including that of IL2, IL5, IL10, IL13, and IFNG. Upon interaction with PVRIG, inhibits T-cell proliferation. These interactions are competitive. Probable cell adhesion protein. The protein is Nectin-2 of Mus musculus (Mouse).